The sequence spans 542 residues: Phosphoenolpyruvate carboxykinase (ATP) (542 aa).

Positions 67, 208, and 214 each coordinate substrate. ATP-binding positions include Lys214, His233, and 249–257 (GLSGTGKTT). Positions 214 and 233 each coordinate Mn(2+). Asp270 serves as a coordination point for Mn(2+). ATP contacts are provided by residues Glu298, Arg334, 450–451 (RI), and Thr456. A substrate-binding site is contributed by Arg334.

Belongs to the phosphoenolpyruvate carboxykinase (ATP) family. As to quaternary structure, monomer. Mn(2+) is required as a cofactor.

Its subcellular location is the cytoplasm. It carries out the reaction oxaloacetate + ATP = phosphoenolpyruvate + ADP + CO2. It functions in the pathway carbohydrate biosynthesis; gluconeogenesis. Functionally, involved in the gluconeogenesis. Catalyzes the conversion of oxaloacetate (OAA) to phosphoenolpyruvate (PEP) through direct phosphoryl transfer between the nucleoside triphosphate and OAA. This Vibrio vulnificus (strain YJ016) protein is Phosphoenolpyruvate carboxykinase (ATP).